The sequence spans 541 residues: MAKIIAFDEEARRGLERGMNQLADAVKVTLGPKGRNVVLEKKWGAPTITNDGVSIAKEIELEDPYEKIGAELVKEVAKKTDDVAGDGTTTATVLAQALVREGLRNVAAGANPMALKRGIEKAVEAVSGALLEQAKDVETKEQIASTASISAADTQIGELIAEAMDKVGKEGVITVEESQTFGLELELTEGMRFDKGYISAYFATDMERMEASLDDPYILIANSKISSVKDLLPLLEKVMQSGKPLLIIAEDVEGEALSTLVVNKIRGTFKSVAVKAPGFGDRRKAMLGDIAILTGGEVISEEVGLKLENASIDLLGRARKVVITKDETTIVDGAGSADQVAGRVNQIRAEIENSDSDYDREKLQERLAKLAGGVAVIKAGAATEVELKERKHRIEDAVRNAKAAVEEGIVAGGGVALIQASSVFEKLELTGDEATGANAVRLALEAPLKQIAVNGGLEGGVIVEKVRNLPVGHGLNAATGEYVDMIAEGIIDPAKVTRSALQNAASIAALFLTTEAVIADKPEKAAAGGAPGGMPGGDMDF.

ATP-binding positions include T29–P32, D86–T90, G413, N476–A478, and D492.

Belongs to the chaperonin (HSP60) family. In terms of assembly, forms a cylinder of 14 subunits composed of two heptameric rings stacked back-to-back. Interacts with the co-chaperonin GroES.

It is found in the cytoplasm. It catalyses the reaction ATP + H2O + a folded polypeptide = ADP + phosphate + an unfolded polypeptide.. Together with its co-chaperonin GroES, plays an essential role in assisting protein folding. The GroEL-GroES system forms a nano-cage that allows encapsulation of the non-native substrate proteins and provides a physical environment optimized to promote and accelerate protein folding. The polypeptide is Chaperonin GroEL 2 (Streptomyces avermitilis (strain ATCC 31267 / DSM 46492 / JCM 5070 / NBRC 14893 / NCIMB 12804 / NRRL 8165 / MA-4680)).